The chain runs to 141 residues: MTCVLKGCVNEVTVLGHETCSIGHANKLRKQVADMVGVTRRCAENNCGWFVCVVINDFTFDVYNCCGRSHLEKCRKRVETRNREIWKQIRRNQAENMSATAKKSHNSKTSKKKFKEDREFGTPKRFLRDDVPFGIDRLFAF.

Short sequence motifs (bipartite nuclear localization signal) lie at residues 75-91 (RKRV…QIRR) and 111-128 (KKKF…RFLR). The disordered stretch occupies residues 94–117 (AENMSATAKKSHNSKTSKKKFKED). Over residues 102-113 (KKSHNSKTSKKK) the composition is skewed to basic residues.

It localises to the host cytoplasm. The protein localises to the host nucleus. Weak suppressor of RNA-mediated gene silencing, also known as post-transcriptional gene silencing (PTGS), a mechanism of plant viral defense that performs sequence-specific inhibition of viral mRNAs expression. This could be used by the virus to infect efficiently the host the meristem cells. This is Suppressor of RNA silencing from Tobacco rattle virus (isolate PpK20) (TRV).